Consider the following 496-residue polypeptide: MTTDQLPAELERVHMVGIGGAGMSGIARILLDRGGLVSGSDAKESRGIHALRARGAQIRIGHDASSLDLLPGGPTAVITTHAAIPKTNPELVEARRRGIPVILRPAVLAKLMDGRTTLMVTGTHGKTTTTSMLIVALQHCGRDPSFAVGGEMGEAGTNAHHGSGDCFVAEADESDGSLLEYTPDVAVVTNIETDHLDFYGSADAYVAVFDAFVERLAPGGALVVCVDDPGAAALARRTAELGIRVLRYGSGSHGQAPSGQPLAATLVSWQQQGTEAVAQIRLAGEQQHPLVMRLSVPGRHMALNAMGALLAAIEIGAPTEAVLDGLAGFEGVRRRFELVGTAGGPAPSSTVRVFDDYAHHPTEIAATLAAVRTLLEQSGGGRSIAVFQPHLYSRTKAFAEEFGRALDAADEVFVLDVYGAREQPLAGVSGASVAEHVSVPVRYLPDFSAAAEQVAAAAAPGDVIVTMGAGDVTLLGPEIVTALRVRANRGAPGALR.

122–128 is an ATP binding site; the sequence is GTHGKTT.

Belongs to the MurCDEF family.

It is found in the cytoplasm. The enzyme catalyses UDP-N-acetyl-alpha-D-muramate + L-alanine + ATP = UDP-N-acetyl-alpha-D-muramoyl-L-alanine + ADP + phosphate + H(+). It participates in cell wall biogenesis; peptidoglycan biosynthesis. Cell wall formation. This is UDP-N-acetylmuramate--L-alanine ligase from Mycolicibacterium paratuberculosis (strain ATCC BAA-968 / K-10) (Mycobacterium paratuberculosis).